We begin with the raw amino-acid sequence, 482 residues long: Cytochrome c-552 (482 aa).

An N-terminal signal peptide occupies residues 1-26; it reads MIKVSNALQRILIGAALALFGGGAQA. Histidine 98 lines the heme c pocket. Cysteine 126, cysteine 129, and lysine 130 together coordinate heme. Heme c is bound by residues cysteine 164, cysteine 167, histidine 168, cysteine 213, cysteine 216, and histidine 217. Glutamate 219, tyrosine 220, lysine 265, and glutamine 267 together coordinate Ca(2+). Tyrosine 220 contributes to the substrate binding site. Residue histidine 268 coordinates substrate. Heme c contacts are provided by histidine 279, cysteine 286, cysteine 289, histidine 290, histidine 305, cysteine 318, cysteine 321, histidine 322, and histidine 397.

The protein belongs to the cytochrome c-552 family. Requires Ca(2+) as cofactor. It depends on heme c as a cofactor.

Its subcellular location is the periplasm. The enzyme catalyses 6 Fe(III)-[cytochrome c] + NH4(+) + 2 H2O = 6 Fe(II)-[cytochrome c] + nitrite + 8 H(+). It participates in nitrogen metabolism; nitrate reduction (assimilation). Its function is as follows. Catalyzes the reduction of nitrite to ammonia, consuming six electrons in the process. In Edwardsiella ictaluri (strain 93-146), this protein is Cytochrome c-552.